Reading from the N-terminus, the 481-residue chain is UDP-N-acetylmuramoyl-L-alanyl-D-glutamate--L-lysine ligase (481 aa).

Serine 42 lines the UDP-N-acetyl-alpha-D-muramoyl-L-alanyl-D-glutamate pocket. Glycine 118 to threonine 124 is an ATP binding site. Residues asparagine 158, threonine 160–threonine 161, serine 187, and arginine 195 each bind UDP-N-acetyl-alpha-D-muramoyl-L-alanyl-D-glutamate. Residue lysine 229 is modified to N6-carboxylysine. An L-lysine recognition motif motif is present at residues aspartate 404–asparagine 407.

This sequence belongs to the MurCDEF family. MurE subfamily. In terms of processing, carboxylation is probably crucial for Mg(2+) binding and, consequently, for the gamma-phosphate positioning of ATP.

It is found in the cytoplasm. It catalyses the reaction UDP-N-acetyl-alpha-D-muramoyl-L-alanyl-D-glutamate + L-lysine + ATP = UDP-N-acetyl-alpha-D-muramoyl-L-alanyl-gamma-D-glutamyl-L-lysine + ADP + phosphate + H(+). The protein operates within cell wall biogenesis; peptidoglycan biosynthesis. In terms of biological role, catalyzes the addition of L-lysine to the nucleotide precursor UDP-N-acetylmuramoyl-L-alanyl-D-glutamate (UMAG) in the biosynthesis of bacterial cell-wall peptidoglycan. The sequence is that of UDP-N-acetylmuramoyl-L-alanyl-D-glutamate--L-lysine ligase from Streptococcus thermophilus (strain ATCC BAA-491 / LMD-9).